Reading from the N-terminus, the 224-residue chain is Redox-sensing transcriptional repressor Rex (224 aa).

The H-T-H motif DNA-binding region spans 17 to 56 (RYHRYLEELLKNDVKRISSRELSEKMGVTASQIRQDLNNF). 91–96 (GAGNLG) provides a ligand contact to NAD(+).

Belongs to the transcriptional regulatory Rex family. In terms of assembly, homodimer.

It localises to the cytoplasm. Functionally, modulates transcription in response to changes in cellular NADH/NAD(+) redox state. In Thermoanaerobacter sp. (strain X514), this protein is Redox-sensing transcriptional repressor Rex.